Reading from the N-terminus, the 362-residue chain is B3 domain-containing protein IDEF1 (362 aa).

The tract at residues 30-91 is disordered; the sequence is VPFPNPFPAP…TPTPTPRGFA (62 aa). The segment covering 48-70 has biased composition (basic residues); the sequence is PHNHNHNHNHNHNIHNSHNHNHN. A DNA-binding region (TF-B3) is located at residues 253-355; sequence LRKELTKSDV…KFIIRGEKAI (103 aa).

In terms of processing, polyubiquitinated. Ubiquitination leads to its subsequent degradation via the proteasome pathway. Expressed in roots.

It localises to the nucleus. In terms of biological role, transcription regulator involved in iron deficiency response and tolerance. May regulate directly iron transporters or other transcription factors involved in iron-deficiency response. Binds specifically to the DNA sequence 5'-CATGC-3' of the IDE1 element found in the promoter of the barley iron deficiency-inducible gene IDS2. This is B3 domain-containing protein IDEF1 (IDEF1) from Oryza sativa subsp. japonica (Rice).